Consider the following 138-residue polypeptide: Large ribosomal subunit protein bL17 (138 aa).

The protein belongs to the bacterial ribosomal protein bL17 family. As to quaternary structure, part of the 50S ribosomal subunit. Contacts protein L32.

This Solidesulfovibrio magneticus (strain ATCC 700980 / DSM 13731 / RS-1) (Desulfovibrio magneticus) protein is Large ribosomal subunit protein bL17.